The following is a 483-amino-acid chain: Betaine aldehyde dehydrogenase (483 aa).

Residues isoleucine 27 and aspartate 93 each contribute to the K(+) site. Residue 149-151 participates in NAD(+) binding; it reads GAW. Residue lysine 161 is the Charge relay system of the active site. 175–178 contacts NAD(+); sequence KPSE. Residue valine 179 participates in K(+) binding. NAD(+) is bound at residue 228–231; the sequence is SVPT. A K(+)-binding site is contributed by valine 243. Glutamate 249 acts as the Proton acceptor in catalysis. NAD(+) contacts are provided by glycine 251, cysteine 283, and glutamate 380. The Nucleophile role is filled by cysteine 283. A Cysteine sulfenic acid (-SOH) modification is found at cysteine 283. Residues lysine 450 and glycine 453 each coordinate K(+). Glutamate 457 serves as the catalytic Charge relay system.

It belongs to the aldehyde dehydrogenase family. Dimer of dimers. It depends on K(+) as a cofactor.

It catalyses the reaction betaine aldehyde + NAD(+) + H2O = glycine betaine + NADH + 2 H(+). Its pathway is amine and polyamine biosynthesis; betaine biosynthesis via choline pathway; betaine from betaine aldehyde: step 1/1. Its function is as follows. Involved in the biosynthesis of the osmoprotectant glycine betaine. Catalyzes the irreversible oxidation of betaine aldehyde to the corresponding acid. This Cereibacter sphaeroides (strain ATCC 17029 / ATH 2.4.9) (Rhodobacter sphaeroides) protein is Betaine aldehyde dehydrogenase.